Here is a 366-residue protein sequence, read N- to C-terminus: Ferrochelatase (366 aa).

His-210 and Glu-293 together coordinate Fe cation.

It belongs to the ferrochelatase family.

The protein localises to the cytoplasm. It catalyses the reaction heme b + 2 H(+) = protoporphyrin IX + Fe(2+). It functions in the pathway porphyrin-containing compound metabolism; protoheme biosynthesis; protoheme from protoporphyrin-IX: step 1/1. In terms of biological role, catalyzes the ferrous insertion into protoporphyrin IX. This chain is Ferrochelatase, found in Leptospira borgpetersenii serovar Hardjo-bovis (strain L550).